The following is a 266-amino-acid chain: MNHDPFSWGRPADSTYGAYNTQIANAGASPMVNTQQPIVTGTSVISMKYDNGVIIAADNLGSYGSLLRFNGVERLIPVGDNTVVGISGDISDMQHIERLLKDLVTENAYDNPLADAEEALEPSYIFEYLATVMYQRRSKMNPLWNAIIVAGVQSNGDQFLRYVNLLGVTYSSPTLATGFGAHMANPLLRKVVDRESDIPKTTVQVAEEAIVNAMRVLYYRDARSSRNFSLAIIDKNTGLTFKKNLQVENMKWDFAKDIKGYGTQKI.

Residues Met-1–Asn-33 constitute a propeptide that is removed on maturation.

The protein belongs to the peptidase T1B family. In terms of assembly, the 26S proteasome consists of a 20S proteasome core and two 19S regulatory subunits. The 20S proteasome core is composed of 28 subunits that are arranged in four stacked rings, resulting in a barrel-shaped structure. The two end rings are each formed by seven alpha subunits, and the two central rings are each formed by seven beta subunits. The catalytic chamber with the active sites is on the inside of the barrel. Interacts with CIC1.

It localises to the cytoplasm. Its subcellular location is the nucleus. Non-catalytic component of the proteasome which degrades poly-ubiquitinated proteins in the cytoplasm and in the nucleus. It is essential for the regulated turnover of proteins and for the removal of misfolded proteins. The proteasome is a multicatalytic proteinase complex that is characterized by its ability to cleave peptides with Arg, Phe, Tyr, Leu, and Glu adjacent to the leaving group at neutral or slightly basic pH. It has an ATP-dependent proteolytic activity. PRE3 and PRE4 are necessary for the peptidyl-glutamyl-peptide-hydrolyzing activity. The protein is Proteasome subunit beta type-7 (PRE4) of Saccharomyces cerevisiae (strain ATCC 204508 / S288c) (Baker's yeast).